The chain runs to 327 residues: Malate dehydrogenase (327 aa).

11-17 (GAAGQIG) provides a ligand contact to NAD(+). Residues Arg-92 and Arg-98 each coordinate substrate. NAD(+) is bound by residues Asn-105, Gln-112, and 129-131 (VGN). The substrate site is built by Asn-131 and Arg-162. The Proton acceptor role is filled by His-187.

It belongs to the LDH/MDH superfamily. MDH type 2 family.

It carries out the reaction (S)-malate + NAD(+) = oxaloacetate + NADH + H(+). In terms of biological role, catalyzes the reversible oxidation of malate to oxaloacetate. The protein is Malate dehydrogenase of Thermus thermophilus (strain ATCC BAA-163 / DSM 7039 / HB27).